Reading from the N-terminus, the 1070-residue chain is Alpha-glucosidase (1070 aa).

Positions M1–L35 are cleaved as a signal peptide. N-linked (GlcNAc...) asparagine glycosylation is found at N48, N99, N144, N161, N208, N384, N458, N480, and N513. Residue D526 is the Nucleophile of the active site. The active site involves E529. N544, N566, N574, N578, and N635 each carry an N-linked (GlcNAc...) asparagine glycan. The active-site Proton donor is D730. 10 N-linked (GlcNAc...) asparagine glycosylation sites follow: N818, N885, N916, N983, N992, N996, N1008, N1029, N1043, and N1052.

This sequence belongs to the glycosyl hydrolase 31 family.

It catalyses the reaction Hydrolysis of terminal, non-reducing (1-&gt;4)-linked alpha-D-glucose residues with release of alpha-D-glucose.. Its function is as follows. Hydrolyzes a broad range of alpha-D-linked glucopyranosides, including maltose (alpha-1,4), sucrose (alpha-1,2), isomaltose (alpha-1,6) and turanose (alpha-1,3). The chain is Alpha-glucosidase from Candida tsukubaensis (Yeast).